A 501-amino-acid chain; its full sequence is Glutamate--tRNA ligase (501 aa).

The 'HIGH' region signature appears at 11 to 21; the sequence is PSPTGFLHIGN. The 'KMSKS' region signature appears at 257 to 261; sequence KLSKR. An ATP-binding site is contributed by lysine 260.

The protein belongs to the class-I aminoacyl-tRNA synthetase family. Glutamate--tRNA ligase type 1 subfamily. As to quaternary structure, monomer.

It localises to the cytoplasm. The catalysed reaction is tRNA(Glu) + L-glutamate + ATP = L-glutamyl-tRNA(Glu) + AMP + diphosphate. Catalyzes the attachment of glutamate to tRNA(Glu) in a two-step reaction: glutamate is first activated by ATP to form Glu-AMP and then transferred to the acceptor end of tRNA(Glu). The sequence is that of Glutamate--tRNA ligase from Limosilactobacillus reuteri subsp. reuteri (strain JCM 1112) (Lactobacillus reuteri).